We begin with the raw amino-acid sequence, 494 residues long: MGSTSSLYAAIDLGSNSFHMLVVREVAGSIQTLTRIKRKVRLAAGLNSENDLSNEAMERGWQCLRLFAERLQDIPPSQIRVVATATLRLAVNAGDFIAKAQEILGCPVQVISGEEEARLIYQGVAHTTGGADQRLVVDIGGASTELVTGTGAQTTSLFSLSMGCVTWLERYFADRNLGQENFDAAEKAAREVLRPVADELRYHGWKVCVGASGTVQALQEIMMAQGMDERITLEKLQQLKQRAIHCGRLEELEIDGLTLERALVFPSGLAILIAIFTELNIQCMTLAGGALREGLVYGMLHLAVEQDIRSRTLRNIQRRFMIDIDQAQRVAKVAANFFDQVENEWHLEAISRDLLISACQLHEIGLSVDFKQAPQHAAYLVRNLDLPGFTPAQKKLLATLLLNQTNPVDLSSLHQQNAVPPRVAEQLCRLLRLAIIFASRRRDDLVPEMTLQANHELLTLTLPQGWLTQHPLGKEIIAQENQWQSYVHWPLEVH.

Belongs to the GppA/Ppx family. GppA subfamily.

It catalyses the reaction guanosine 3'-diphosphate 5'-triphosphate + H2O = guanosine 3',5'-bis(diphosphate) + phosphate + H(+). Its pathway is purine metabolism; ppGpp biosynthesis; ppGpp from GTP: step 2/2. In terms of biological role, catalyzes the conversion of pppGpp to ppGpp. Guanosine pentaphosphate (pppGpp) is a cytoplasmic signaling molecule which together with ppGpp controls the 'stringent response', an adaptive process that allows bacteria to respond to amino acid starvation, resulting in the coordinated regulation of numerous cellular activities. This chain is Guanosine-5'-triphosphate,3'-diphosphate pyrophosphatase, found in Shigella flexneri.